A 186-amino-acid chain; its full sequence is Large ribosomal subunit protein uL6 (186 aa).

The protein belongs to the universal ribosomal protein uL6 family. As to quaternary structure, part of the 50S ribosomal subunit.

In terms of biological role, this protein binds to the 23S rRNA, and is important in its secondary structure. It is located near the subunit interface in the base of the L7/L12 stalk, and near the tRNA binding site of the peptidyltransferase center. The polypeptide is Large ribosomal subunit protein uL6 (Hyperthermus butylicus (strain DSM 5456 / JCM 9403 / PLM1-5)).